The following is a 435-amino-acid chain: MRGAYYIIIALCVVASSQVAAGSDRQLQIYEHGVMPADNAVVKTLAKRFLRGSRVVHDDLANEERSFHPFLVDMIEEGIKEMSHAAEIVEEMPLAGKVVEEVPHATEGGQQKMDKGAEEAFEKHVEPSGHTATIQDTSRDISTQEVIQLSPHEWESDLSKLKPFVVLNKHRGRIEPVKDAFAAFCDEGLKPTTEETSIIWSMLGWNLARKPKGKHRQHLIAQARRGVLLDLRIVRMDESLWNKWMQLPKPLRMLKLNNLLNMHYQRWVHLFNIFQRRLSEIIGPPPKLKVAHGDTTDTSKALALHTHSNMQSSTPSEPLNAASTFKVERFVWGANRPKRTTDGNTGTISLPTKPTKTHRLKPLMPRLTESTTSSDLLVPTKRMRLSFGGTRSAFAPYKDPKEKLLAPSSTALTHKDIDLDLSLGGIYGKRTDKAL.

Residues 1-22 (MRGAYYIIIALCVVASSQVAAG) form the signal peptide. The RxLR-dEER motif lies at 48-65 (RFLRGSRVVHDDLANEER). The disordered stretch occupies residues 336 to 357 (RPKRTTDGNTGTISLPTKPTKT). Over residues 342 to 354 (DGNTGTISLPTKP) the composition is skewed to polar residues.

The protein belongs to the RxLR effector family.

The protein resides in the secreted. It localises to the host nucleus. Secreted effector that acts as an elicitor that induces cell death in host plant cells. This is Secreted RxLR effector protein 35 from Plasmopara viticola (Downy mildew of grapevine).